The primary structure comprises 147 residues: Transcriptional regulator MraZ (147 aa).

2 consecutive SpoVT-AbrB domains span residues 5–50 (AVAL…PLTA) and 79–122 (AQEE…SDAG).

Belongs to the MraZ family. In terms of assembly, forms oligomers.

The protein localises to the cytoplasm. It localises to the nucleoid. This Azoarcus sp. (strain BH72) protein is Transcriptional regulator MraZ.